The primary structure comprises 317 residues: Ribosomal protein L11 methyltransferase (317 aa).

4 residues coordinate S-adenosyl-L-methionine: T158, G179, D201, and N244.

The protein belongs to the methyltransferase superfamily. PrmA family.

It localises to the cytoplasm. The catalysed reaction is L-lysyl-[protein] + 3 S-adenosyl-L-methionine = N(6),N(6),N(6)-trimethyl-L-lysyl-[protein] + 3 S-adenosyl-L-homocysteine + 3 H(+). Methylates ribosomal protein L11. This Streptococcus pyogenes serotype M18 (strain MGAS8232) protein is Ribosomal protein L11 methyltransferase.